We begin with the raw amino-acid sequence, 284 residues long: Hypoxanthine-guanine phosphoribosyltransferase (284 aa).

Residues Lys129, 194–202 (EDIIDTGKT), Lys226, and Asp253 contribute to the GMP site. Catalysis depends on Asp198, which acts as the Proton acceptor. Asp253 serves as a coordination point for Mg(2+).

This sequence belongs to the purine/pyrimidine phosphoribosyltransferase family. Homotetramer. The cofactor is Mg(2+).

The protein resides in the cytoplasm. The catalysed reaction is IMP + diphosphate = hypoxanthine + 5-phospho-alpha-D-ribose 1-diphosphate. The enzyme catalyses GMP + diphosphate = guanine + 5-phospho-alpha-D-ribose 1-diphosphate. It functions in the pathway purine metabolism; IMP biosynthesis via salvage pathway; IMP from hypoxanthine: step 1/1. In terms of biological role, converts guanine to guanosine monophosphate, and hypoxanthine to inosine monophosphate. Transfers the 5-phosphoribosyl group from 5-phosphoribosylpyrophosphate onto the purine. Plays a central role in the generation of purine nucleotides through the purine salvage pathway. This chain is Hypoxanthine-guanine phosphoribosyltransferase (HGPRT), found in Schistosoma mansoni (Blood fluke).